The primary structure comprises 312 residues: Zinc transporter ZitB (312 aa).

Transmembrane regions (helical) follow at residues 21–41, 48–68, 90–110, 123–143, and 164–184; these read LLFAFIVTAGFMLLEVVGGIL, LADAGHMLTDAAALLFALLVV, AAFVNAIALVVITLLIVWEAI, LMMVIAVAGLLANLFAFWILH, and LLGSVGAIVAALIIIWTGWTP.

It belongs to the cation diffusion facilitator (CDF) transporter (TC 2.A.4) family. SLC30A subfamily.

It localises to the cell inner membrane. In terms of biological role, involved in zinc efflux across the cytoplasmic membrane, thus reducing zinc accumulation in the cytoplasm and rendering bacteria more resistant to zinc. It may contribute to zinc homeostasis at low concentrations of zinc. This is Zinc transporter ZitB from Salmonella typhi.